Reading from the N-terminus, the 177-residue chain is Adenine phosphoribosyltransferase (177 aa).

The protein belongs to the purine/pyrimidine phosphoribosyltransferase family. Homodimer.

The protein localises to the cytoplasm. The catalysed reaction is AMP + diphosphate = 5-phospho-alpha-D-ribose 1-diphosphate + adenine. It participates in purine metabolism; AMP biosynthesis via salvage pathway; AMP from adenine: step 1/1. Catalyzes a salvage reaction resulting in the formation of AMP, that is energically less costly than de novo synthesis. In Leuconostoc citreum (strain KM20), this protein is Adenine phosphoribosyltransferase.